The following is a 220-amino-acid chain: Deoxyribose-phosphate aldolase (220 aa).

Catalysis depends on aspartate 89, which acts as the Proton donor/acceptor. Lysine 151 acts as the Schiff-base intermediate with acetaldehyde in catalysis. The active-site Proton donor/acceptor is the lysine 180.

This sequence belongs to the DeoC/FbaB aldolase family. DeoC type 1 subfamily.

It localises to the cytoplasm. The catalysed reaction is 2-deoxy-D-ribose 5-phosphate = D-glyceraldehyde 3-phosphate + acetaldehyde. It participates in carbohydrate degradation; 2-deoxy-D-ribose 1-phosphate degradation; D-glyceraldehyde 3-phosphate and acetaldehyde from 2-deoxy-alpha-D-ribose 1-phosphate: step 2/2. Its function is as follows. Catalyzes a reversible aldol reaction between acetaldehyde and D-glyceraldehyde 3-phosphate to generate 2-deoxy-D-ribose 5-phosphate. This Streptococcus gordonii (strain Challis / ATCC 35105 / BCRC 15272 / CH1 / DL1 / V288) protein is Deoxyribose-phosphate aldolase.